The sequence spans 887 residues: Tubulin polyglutamylase TTLL7 (887 aa).

Positions 1-21 (MPSLPQEGVIQGPSPLDLNTE) are disordered. A TTL domain is found at 38-390 (KGTITANVAG…RTSDKRRNLA (353 aa)). ATP is bound by residues Lys-160, 166–167 (MG), 188–191 (QEYI), and 201–203 (KFD). An L-glutamate-binding site is contributed by Arg-227. 249 to 250 (TN) serves as a coordination point for ATP. Positions 251, 252, and 271 each coordinate L-glutamate. Mg(2+)-binding residues include Asp-336, Glu-349, and Asn-351. Lys-367 contacts L-glutamate. The interval 388 to 450 (NLAKQKAEAQ…ISREEHENRH (63 aa)) is c-MTBD region. 2 disordered regions span residues 519–621 (MGKT…TRPF) and 651–676 (LPHS…TKEQ). The segment covering 548-560 (SSDSSYDSSSSSS) has biased composition (low complexity). Composition is skewed to polar residues over residues 593 to 621 (QQPS…TRPF) and 656 to 670 (DACS…SLRQ).

This sequence belongs to the tubulin--tyrosine ligase family. In terms of assembly, interacts with both alpha- and beta-tubulin (via C-terminal tubulin tails). Mg(2+) serves as cofactor. In terms of tissue distribution, highly expressed in the nervous system including spinal cord, thalamus, hippocampus, hypothalamus and cerebellum.

It localises to the cell projection. The protein resides in the cilium. The protein localises to the cytoplasm. Its subcellular location is the cytoskeleton. It is found in the cilium basal body. It localises to the dendrite. The protein resides in the perikaryon. It catalyses the reaction L-glutamyl-[protein] + L-glutamate + ATP = gamma-L-glutamyl-L-glutamyl-[protein] + ADP + phosphate + H(+). It carries out the reaction (L-glutamyl)(n)-gamma-L-glutamyl-L-glutamyl-[protein] + L-glutamate + ATP = (L-glutamyl)(n+1)-gamma-L-glutamyl-L-glutamyl-[protein] + ADP + phosphate + H(+). Polyglutamylase which modifies tubulin, generating polyglutamate side chains of variable lengths on the gamma-carboxyl group of specific glutamate residues within the C-terminal tail of tubulin. Mediates both ATP-dependent initiation and elongation steps of the polyglutamylation reaction. Preferentially modifies the beta-tubulin tail over an alpha-tail. Competes with monoglycylase TTLL3 for modification site on beta-tubulin substrate, thereby creating an anticorrelation between glycylation and glutamylation reactions. Required for neurite growth; responsible for the strong increase in tubulin polyglutamylation during postnatal neuronal maturation. The protein is Tubulin polyglutamylase TTLL7 of Homo sapiens (Human).